The chain runs to 118 residues: D-dopachrome decarboxylase (118 aa).

At Pro-2 the chain carries N-acetylproline.

Belongs to the MIF family. As to quaternary structure, homotrimer.

The protein localises to the cytoplasm. It catalyses the reaction D-dopachrome + H(+) = 5,6-dihydroxyindole + CO2. Functionally, tautomerization of D-dopachrome with decarboxylation to give 5,6-dihydroxyindole (DHI). This chain is D-dopachrome decarboxylase (ddt), found in Xenopus tropicalis (Western clawed frog).